The sequence spans 378 residues: Beta sliding clamp (378 aa).

It belongs to the beta sliding clamp family. As to quaternary structure, forms a ring-shaped head-to-tail homodimer around DNA which binds and tethers DNA polymerases and other proteins to the DNA. The DNA replisome complex has a single clamp-loading complex (3 tau and 1 each of delta, delta', psi and chi subunits) which binds 3 Pol III cores (1 core on the leading strand and 2 on the lagging strand) each with a beta sliding clamp dimer. Additional proteins in the replisome are other copies of gamma, psi and chi, Ssb, DNA helicase and RNA primase.

It localises to the cytoplasm. Confers DNA tethering and processivity to DNA polymerases and other proteins. Acts as a clamp, forming a ring around DNA (a reaction catalyzed by the clamp-loading complex) which diffuses in an ATP-independent manner freely and bidirectionally along dsDNA. Initially characterized for its ability to contact the catalytic subunit of DNA polymerase III (Pol III), a complex, multichain enzyme responsible for most of the replicative synthesis in bacteria; Pol III exhibits 3'-5' exonuclease proofreading activity. The beta chain is required for initiation of replication as well as for processivity of DNA replication. In Streptococcus pneumoniae serotype 4 (strain ATCC BAA-334 / TIGR4), this protein is Beta sliding clamp (dnaN).